A 164-amino-acid chain; its full sequence is Cytochrome c-type biogenesis protein CcmE (164 aa).

Residues 1-8 (MNPRRKSR) are Cytoplasmic-facing. Residues 9 to 29 (LYLAMVVLIGISLTTTLVLYA) form a helical; Signal-anchor for type II membrane protein membrane-spanning segment. The Periplasmic segment spans residues 30 to 164 (LRSNIDLFYT…RGTNTTGNAL (135 aa)). His-130 and Tyr-134 together coordinate heme. The interval 140–164 (EEAMKENHSRPAAAYRGTNTTGNAL) is disordered.

It belongs to the CcmE/CycJ family.

The protein localises to the cell inner membrane. Its function is as follows. Heme chaperone required for the biogenesis of c-type cytochromes. Transiently binds heme delivered by CcmC and transfers the heme to apo-cytochromes in a process facilitated by CcmF and CcmH. This is Cytochrome c-type biogenesis protein CcmE from Yersinia pseudotuberculosis serotype O:3 (strain YPIII).